A 529-amino-acid chain; its full sequence is Peptide chain release factor 3 (529 aa).

In terms of domain architecture, tr-type G spans 11-280; that stretch reads AKRRTFAIIS…GLVEWAPAPM (270 aa). GTP-binding positions include 20–27, 88–92, and 142–145; these read SHPDAGKT, DTPGH, and NKLD.

Belongs to the TRAFAC class translation factor GTPase superfamily. Classic translation factor GTPase family. PrfC subfamily.

Its subcellular location is the cytoplasm. In terms of biological role, increases the formation of ribosomal termination complexes and stimulates activities of RF-1 and RF-2. It binds guanine nucleotides and has strong preference for UGA stop codons. It may interact directly with the ribosome. The stimulation of RF-1 and RF-2 is significantly reduced by GTP and GDP, but not by GMP. In Shigella sonnei (strain Ss046), this protein is Peptide chain release factor 3.